Reading from the N-terminus, the 326-residue chain is N-acetyl-gamma-glutamyl-phosphate reductase (326 aa).

C155 is a catalytic residue.

This sequence belongs to the NAGSA dehydrogenase family. Type 1 subfamily.

Its subcellular location is the cytoplasm. The enzyme catalyses N-acetyl-L-glutamate 5-semialdehyde + phosphate + NADP(+) = N-acetyl-L-glutamyl 5-phosphate + NADPH + H(+). It functions in the pathway amino-acid biosynthesis; L-arginine biosynthesis; N(2)-acetyl-L-ornithine from L-glutamate: step 3/4. Functionally, catalyzes the NADPH-dependent reduction of N-acetyl-5-glutamyl phosphate to yield N-acetyl-L-glutamate 5-semialdehyde. This Shewanella denitrificans (strain OS217 / ATCC BAA-1090 / DSM 15013) protein is N-acetyl-gamma-glutamyl-phosphate reductase.